The sequence spans 201 residues: Transmembrane 4 L6 family member 18 (201 aa).

At 1 to 9 (MGSRKCGSC) the chain is on the cytoplasmic side. Residues 10-30 (LSSLLIPLALWSIIVNILLYF) traverse the membrane as a helical segment. At 31–49 (PNGQASYASSNKLTNYVWY) the chain is on the extracellular side. Residues 50–70 (FEGICFSGIMMLVVAAVLLVL) traverse the membrane as a helical segment. Topologically, residues 71–93 (ENDNNYKCCQSENCSKKYMTVLS) are cytoplasmic. Residues 94–114 (MIFSALGIAFSGYCLVISALG) form a helical membrane-spanning segment. Over 115–157 (LLQGPYCRTLDGWEYAFEGTAGRFLTDSREWIQCLEPAHVVEW) the chain is Extracellular. Residues 158–178 (NIILFSILIALSGLQVIVCLI) form a helical membrane-spanning segment. Residues 179-201 (RVVIQLSKSLCGTYSVIIQPGII) lie on the Cytoplasmic side of the membrane.

The protein belongs to the L6 tetraspanin family.

The protein localises to the membrane. The polypeptide is Transmembrane 4 L6 family member 18 (TM4SF18) (Bos taurus (Bovine)).